Consider the following 461-residue polypeptide: Serine--tRNA ligase (461 aa).

The disordered stretch occupies residues Glu112–Phe134. Residues Pro114–Phe134 are compositionally biased toward basic and acidic residues. Thr252–Glu254 serves as a coordination point for L-serine. Position 283 to 285 (Arg283 to Glu285) interacts with ATP. Residue Glu306 coordinates L-serine. Residue Glu370–Ser373 participates in ATP binding. Residue Ser406 participates in L-serine binding.

The protein belongs to the class-II aminoacyl-tRNA synthetase family. Type-1 seryl-tRNA synthetase subfamily. As to quaternary structure, homodimer. The tRNA molecule binds across the dimer.

Its subcellular location is the cytoplasm. It catalyses the reaction tRNA(Ser) + L-serine + ATP = L-seryl-tRNA(Ser) + AMP + diphosphate + H(+). The enzyme catalyses tRNA(Sec) + L-serine + ATP = L-seryl-tRNA(Sec) + AMP + diphosphate + H(+). It participates in aminoacyl-tRNA biosynthesis; selenocysteinyl-tRNA(Sec) biosynthesis; L-seryl-tRNA(Sec) from L-serine and tRNA(Sec): step 1/1. In terms of biological role, catalyzes the attachment of serine to tRNA(Ser). Is also able to aminoacylate tRNA(Sec) with serine, to form the misacylated tRNA L-seryl-tRNA(Sec), which will be further converted into selenocysteinyl-tRNA(Sec). The sequence is that of Serine--tRNA ligase from Methylocella silvestris (strain DSM 15510 / CIP 108128 / LMG 27833 / NCIMB 13906 / BL2).